Reading from the N-terminus, the 249-residue chain is Segregation and condensation protein A (249 aa).

The protein belongs to the ScpA family. As to quaternary structure, component of a cohesin-like complex composed of ScpA, ScpB and the Smc homodimer, in which ScpA and ScpB bind to the head domain of Smc. The presence of the three proteins is required for the association of the complex with DNA.

The protein localises to the cytoplasm. Its function is as follows. Participates in chromosomal partition during cell division. May act via the formation of a condensin-like complex containing Smc and ScpB that pull DNA away from mid-cell into both cell halves. The chain is Segregation and condensation protein A from Oceanobacillus iheyensis (strain DSM 14371 / CIP 107618 / JCM 11309 / KCTC 3954 / HTE831).